The sequence spans 271 residues: uncharacterized protein (271 aa).

Belongs to the HAD-like hydrolase superfamily.

This is an uncharacterized protein from Staphylococcus aureus (strain NCTC 8325 / PS 47).